A 182-amino-acid polypeptide reads, in one-letter code: Nuclear cap-binding protein subunit 2 (182 aa).

MRNA is bound by residues Tyr13, Tyr35, 104-108, 115-119, and 125-126; these read RADLD, RQYGR, and QV. Positions 32–110 constitute an RRM domain; sequence NCVYVGNLSF…RIIRADLDHG (79 aa). The interval 114–182 is disordered; sequence GRQYGRGASG…NPRYNRWKKN (69 aa). Positions 126-136 are enriched in basic and acidic residues; that stretch reads VRDEMREEFDP. Residues 145–175 show a composition bias toward polar residues; that stretch reads RQPTSSRQLANYSGISSAPLGSSLELQSNPR.

Belongs to the RRM NCBP2 family. Component of the nuclear cap-binding complex (CBC), a heterodimer composed of cbc1 and cbc2 that interacts with capped RNAs.

Its subcellular location is the cytoplasm. The protein resides in the perinuclear region. It is found in the nucleus. Its function is as follows. Component of the CBC complex, which binds co-transcriptionally to the 5' cap of pre-mRNAs and is involved in maturation, export and degradation of nuclear mRNAs. The sequence is that of Nuclear cap-binding protein subunit 2 (cbc2) from Schizosaccharomyces pombe (strain 972 / ATCC 24843) (Fission yeast).